Here is a 236-residue protein sequence, read N- to C-terminus: Protein CUSTOS (236 aa).

Disordered stretches follow at residues 1 to 57 and 83 to 236; these read MSES…GTTP and VEPA…KKDE. 2 stretches are compositionally biased toward basic and acidic residues: residues 10–51 and 156–165; these read NTAR…HDGN and EKTEEKSTKE. Positions 173–181 match the Nucleolar localization signal (NLS1) motif; it reads KMKKKKKRK. A compositionally biased stretch (basic and acidic residues) spans 182 to 196; it reads TSSEESQDKVNHQTE. A compositionally biased stretch (polar residues) spans 197–210; it reads KQSNVEGNQEQTTA. Positions 211 to 219 match the Nucleolar localization signal (NLS2) motif; sequence GERLKKKKK. Over residues 214–227 the composition is skewed to basic residues; sequence LKKKKKKKKKKRKK.

This sequence belongs to the CUSTOS family. Interacts (via NLS1 and NLS2) with dvl2; the interaction is negatively regulated by Wnt stimulation. Interacts with csnk1a1. Interacts with ctnnb1; the interaction is positively regulated by Wnt stimulation. Post-translationally, phosphorylated by ck1/csnk1a1.

It is found in the nucleus envelope. Its function is as follows. Essential for Spemann-Mangold organizer formation and subsequent anterior head development in the embryo. Inhibits canonical Wnt signaling pathway by antagonizing nuclear import of beta-catenin (ctnnb1) during embryogenesis. This chain is Protein CUSTOS, found in Danio rerio (Zebrafish).